Consider the following 266-residue polypeptide: Ribosomal RNA small subunit methyltransferase A (266 aa).

Residues Asn10, Ile12, Gly37, Glu58, Asp82, and Asn105 each coordinate S-adenosyl-L-methionine.

This sequence belongs to the class I-like SAM-binding methyltransferase superfamily. rRNA adenine N(6)-methyltransferase family. RsmA subfamily.

Its subcellular location is the cytoplasm. It catalyses the reaction adenosine(1518)/adenosine(1519) in 16S rRNA + 4 S-adenosyl-L-methionine = N(6)-dimethyladenosine(1518)/N(6)-dimethyladenosine(1519) in 16S rRNA + 4 S-adenosyl-L-homocysteine + 4 H(+). In terms of biological role, specifically dimethylates two adjacent adenosines (A1518 and A1519) in the loop of a conserved hairpin near the 3'-end of 16S rRNA in the 30S particle. May play a critical role in biogenesis of 30S subunits. This chain is Ribosomal RNA small subunit methyltransferase A, found in Mycoplasma mycoides subsp. mycoides SC (strain CCUG 32753 / NCTC 10114 / PG1).